The sequence spans 313 residues: Acetyl-coenzyme A carboxylase carboxyl transferase subunit alpha (313 aa).

One can recognise a CoA carboxyltransferase C-terminal domain in the interval 34 to 288; the sequence is KLKDQRDIAL…KNVVLEAVNE (255 aa).

This sequence belongs to the AccA family. As to quaternary structure, acetyl-CoA carboxylase is a heterohexamer composed of biotin carboxyl carrier protein (AccB), biotin carboxylase (AccC) and two subunits each of ACCase subunit alpha (AccA) and ACCase subunit beta (AccD).

The protein localises to the cytoplasm. It carries out the reaction N(6)-carboxybiotinyl-L-lysyl-[protein] + acetyl-CoA = N(6)-biotinyl-L-lysyl-[protein] + malonyl-CoA. It functions in the pathway lipid metabolism; malonyl-CoA biosynthesis; malonyl-CoA from acetyl-CoA: step 1/1. Functionally, component of the acetyl coenzyme A carboxylase (ACC) complex. First, biotin carboxylase catalyzes the carboxylation of biotin on its carrier protein (BCCP) and then the CO(2) group is transferred by the carboxyltransferase to acetyl-CoA to form malonyl-CoA. The polypeptide is Acetyl-coenzyme A carboxylase carboxyl transferase subunit alpha (Fusobacterium nucleatum subsp. nucleatum (strain ATCC 25586 / DSM 15643 / BCRC 10681 / CIP 101130 / JCM 8532 / KCTC 2640 / LMG 13131 / VPI 4355)).